We begin with the raw amino-acid sequence, 268 residues long: uncharacterized protein (268 aa).

Residues 21 to 61 (CVICLQKDGLRAQLSPCGHDQFDYSCICRWMDQSLTCPICK) form an RING-type; degenerate zinc finger.

It localises to the mitochondrion. The protein localises to the nucleus. This is an uncharacterized protein from Schizosaccharomyces pombe (strain 972 / ATCC 24843) (Fission yeast).